A 506-amino-acid polypeptide reads, in one-letter code: Probable UTP--glucose-1-phosphate uridylyltransferase (506 aa).

2 positions are modified to phosphoserine: Ser15 and Ser17. UTP-binding positions include 115-118 (LNGG), Lys129, Gln192, and Gly221. 117–118 (GG) contributes to the substrate binding site. Position 129 (Lys129) interacts with Mg(2+). Substrate contacts are provided by residues His222 and 250–252 (NID). UTP-binding residues include Asp252 and Lys394. Residue Asp252 coordinates Mg(2+). The active site involves Lys394. The tract at residues 455–506 (HLTITGDVNIGRNVTLKGTVIIVASDANRIDIPNGSVLENCVITGNLNILEH) is oligomerization.

This sequence belongs to the UDPGP type 1 family. As to quaternary structure, homooctamer.

The protein localises to the cytoplasm. The protein resides in the nucleus. The catalysed reaction is alpha-D-glucose 1-phosphate + UTP + H(+) = UDP-alpha-D-glucose + diphosphate. Its function is as follows. Plays a central role as a glucosyl donor in cellular metabolic pathways. This chain is Probable UTP--glucose-1-phosphate uridylyltransferase (fyu1), found in Schizosaccharomyces pombe (strain 972 / ATCC 24843) (Fission yeast).